The following is a 512-amino-acid chain: Multidrug resistance protein 3 (512 aa).

The next 14 helical transmembrane spans lie at 13-33 (FVVL…TIVA), 48-68 (KFAW…PIYG), 79-99 (FFLF…IAQT), 109-129 (IQGI…FDLF), 139-159 (GMFG…GAII), 163-183 (ISWH…LFFI), 200-220 (WGGA…LELG), 228-248 (SIQI…FFIV), 272-292 (ILAF…PIFV), 304-324 (GFIL…GGIF), 333-353 (LMLI…NMTP), 358-378 (VWLT…FSLL), 399-421 (SFLR…TNVF), and 475-495 (ITYV…TILF).

This sequence belongs to the major facilitator superfamily. EmrB family.

It is found in the cell membrane. Its function is as follows. Confers resistance to puromycin, tosufloxacin and norfloxacin. The polypeptide is Multidrug resistance protein 3 (bmr3) (Bacillus subtilis (strain 168)).